Consider the following 68-residue polypeptide: Large ribosomal subunit protein bL32 (68 aa).

The segment at 1 to 20 is disordered; it reads MAVPQNRVTRSRRNMRRSHD.

It belongs to the bacterial ribosomal protein bL32 family.

This chain is Large ribosomal subunit protein bL32, found in Cereibacter sphaeroides (strain ATCC 17029 / ATH 2.4.9) (Rhodobacter sphaeroides).